The primary structure comprises 205 residues: Ypt/Rab-type GTPase avaA (205 aa).

Residues Ser-17 to Ser-23, Phe-33 to Thr-40, Gly-66, Asn-125 to Asp-128, and Ser-157 to Lys-159 each bind GTP. Positions Tyr-37–Phe-45 match the Effector region motif. 2 S-geranylgeranyl cysteine lipidation sites follow: Cys-203 and Cys-205. The residue at position 205 (Cys-205) is a Cysteine methyl ester.

This sequence belongs to the small GTPase superfamily. Rab family.

Rab activation is generally mediated by a guanine exchange factor (GEF), while inactivation through hydrolysis of bound GTP is catalyzed by a GTPase activating protein (GAP). Ypt/Rab-type GTPases are key regulators of membrane trafficking and intracellular vesicular transport. They act as molecular switches that convert between GTP-bound and GDP-bound states, and regulate virtually all steps of membrane traffic from the formation of the transport vesicle at the donor membrane to its fusion at the target membrane. In the GDP-bound state, Ypt proteins are predominantly cytosolic, solubilized through the interaction with a GDP dissociation inhibitor (GDI). In the GTP-bound state, the proteins are membrane bound and interact with specific effector proteins that select cargo, promote vesicle movement, or verify the correct site of fusion. AvaA functions in vacuolar biogenesis. The polypeptide is Ypt/Rab-type GTPase avaA (Emericella nidulans (strain FGSC A4 / ATCC 38163 / CBS 112.46 / NRRL 194 / M139) (Aspergillus nidulans)).